The sequence spans 88 residues: Enticin (88 aa).

A signal peptide spans 1–19 (MKTALPLLLLTCLVAAVQS). Cystine bridges form between cysteine 25–cysteine 33, cysteine 40–cysteine 52, and cysteine 59–cysteine 67. The propeptide occupies 69–88 (REQSQLNHDHLNNHTTTQQP).

As to quaternary structure, binds to attractin and temptin.

It localises to the secreted. A component of the complex of water-borne protein pheromones that stimulates attraction and mating behavior. The sequence is that of Enticin from Aplysia californica (California sea hare).